We begin with the raw amino-acid sequence, 135 residues long: Small ribosomal subunit protein uS12 (135 aa).

Residues 1–29 (MPTINQLVRKGREKVEKKSKAPALQGNPQ) are disordered. Asp-89 carries the post-translational modification 3-methylthioaspartic acid. Positions 106-135 (GVKDRKQSRSKYGAKRPKPGQAAATTGKKK) are disordered. Basic residues predominate over residues 113–123 (SRSKYGAKRPK).

It belongs to the universal ribosomal protein uS12 family. Part of the 30S ribosomal subunit. Contacts proteins S8 and S17. May interact with IF1 in the 30S initiation complex.

Its function is as follows. With S4 and S5 plays an important role in translational accuracy. In terms of biological role, interacts with and stabilizes bases of the 16S rRNA that are involved in tRNA selection in the A site and with the mRNA backbone. Located at the interface of the 30S and 50S subunits, it traverses the body of the 30S subunit contacting proteins on the other side and probably holding the rRNA structure together. The combined cluster of proteins S8, S12 and S17 appears to hold together the shoulder and platform of the 30S subunit. The sequence is that of Small ribosomal subunit protein uS12 from Sulfurihydrogenibium sp. (strain YO3AOP1).